A 400-amino-acid chain; its full sequence is Phosphoglycerate kinase (400 aa).

Substrate contacts are provided by residues 22 to 24 (DFN), Arg-38, 61 to 64 (HLGR), Arg-120, and Arg-153. ATP-binding positions include Lys-206, Gly-297, Glu-328, and 354–357 (GGDT).

Belongs to the phosphoglycerate kinase family. In terms of assembly, monomer.

The protein resides in the cytoplasm. It catalyses the reaction (2R)-3-phosphoglycerate + ATP = (2R)-3-phospho-glyceroyl phosphate + ADP. It functions in the pathway carbohydrate degradation; glycolysis; pyruvate from D-glyceraldehyde 3-phosphate: step 2/5. This chain is Phosphoglycerate kinase, found in Campylobacter curvus (strain 525.92).